A 323-amino-acid polypeptide reads, in one-letter code: MVTVFDAVADRAQRVRHPEKAHRPDTEVLRKPDWIRVKAPTSKGYQETRSIVKSHNLVTVCEEAGCPNIGECWDKKHATFMIMGEICTRACAFCNVATGRPNALDLDEPVNVAKAVKQMGLSHVVITSVDRDDLEDGGAEHFERVIFAIREASPQTTIEILTPDFLRKPGALERVVAAKPDVFNHNLETVPSNYLTVRPGARYFHSIRLLQRVKELDPTMFTKSGIMVGLGEERNEVLQLMDDLRTADVDFLTIGQYLQPTRKHHKVEKFVTPDEFKSYETVAYTKGFLMVSSSPLTRSSHHAGDDFARLKAAREKKLLAAAE.

C61, C66, C72, C87, C91, C94, and S300 together coordinate [4Fe-4S] cluster. The Radical SAM core domain maps to 73 to 289 (WDKKHATFMI…ETVAYTKGFL (217 aa)).

It belongs to the radical SAM superfamily. Lipoyl synthase family. Requires [4Fe-4S] cluster as cofactor.

The protein localises to the cytoplasm. It catalyses the reaction [[Fe-S] cluster scaffold protein carrying a second [4Fe-4S](2+) cluster] + N(6)-octanoyl-L-lysyl-[protein] + 2 oxidized [2Fe-2S]-[ferredoxin] + 2 S-adenosyl-L-methionine + 4 H(+) = [[Fe-S] cluster scaffold protein] + N(6)-[(R)-dihydrolipoyl]-L-lysyl-[protein] + 4 Fe(3+) + 2 hydrogen sulfide + 2 5'-deoxyadenosine + 2 L-methionine + 2 reduced [2Fe-2S]-[ferredoxin]. Its pathway is protein modification; protein lipoylation via endogenous pathway; protein N(6)-(lipoyl)lysine from octanoyl-[acyl-carrier-protein]: step 2/2. Functionally, catalyzes the radical-mediated insertion of two sulfur atoms into the C-6 and C-8 positions of the octanoyl moiety bound to the lipoyl domains of lipoate-dependent enzymes, thereby converting the octanoylated domains into lipoylated derivatives. The sequence is that of Lipoyl synthase from Sinorhizobium medicae (strain WSM419) (Ensifer medicae).